We begin with the raw amino-acid sequence, 275 residues long: MTSVAGPHKRLEGKVAIITGGASGIGACTAELFHENGAKVVIADIQDDLGQALATKLGGKACYIHCDVSKEDEVINLVDTTVAKYGRLDIMFNNAGIIEGQGLPVSVVESEKSDLDRLLSVNLGGAFLGAKHATRVMVQQRKGCILFTSSVCTSIAGLSGHAYAASKSGVCGLAKNLTPELGKYGIRVNCISPYGLVTGVSNVSGEGEANREFVEAMLSELGTLSGQTLRADGIAKAALFLASDEAYYVSGINMVVDGGYSVVNPRLVDSINSKL.

17–41 provides a ligand contact to NAD(+); it reads IITGGASGIGACTAELFHENGAKVV. S150 lines the substrate pocket. The active-site Proton acceptor is the Y163.

This sequence belongs to the short-chain dehydrogenases/reductases (SDR) family.

In terms of biological role, has no tropinone reductase activity. This chain is Tropinone reductase-like 2, found in Erythroxylum coca (Coca plant).